A 424-amino-acid polypeptide reads, in one-letter code: MGITIVLGSQWGDEGKGKITDMLSQQATLCCRAAGGHNAGHTIVHENITYDFHILPSGLVSPSCVNLIGAGTVVHVPSFFKELASLEEKGLKDAGKRIFISDRAHVCFDLHSVVDGLEEAKLGGRKVGTTGKGIGPCYSDKAARRGVRIGEIMDEAVFERKLRSLHAGYTARFGELEYDVEEEIGRFKDYRKRLVPYVVDQLAFFKQYKDSPNTLVEGANALMLDLDHGTYPYVTSSSTGLGGAVQALSLNPTSITSVIGVVKAYTTRVGSGPFPSEQLNEYGDKLQSVGREFGVTTGRRRRCGWFDLVLCRYSQAINHYTALNLTKLDILDDFDEIKVAVAYVLPDGTRLTDTYPADADLLEKVKVEYVSLPGWKSNTMGVRKYEDLPANARAYIEYIERELGGVPVKWIGTGPARDHMICRE.

Residues glycine 12–lysine 18 and glycine 40–threonine 42 each bind GTP. Aspartate 13 serves as the catalytic Proton acceptor. The Mg(2+) site is built by aspartate 13 and glycine 40. IMP is bound by residues aspartate 13–lysine 16, asparagine 38–histidine 41, threonine 130, arginine 144, asparagine 220, threonine 235, and arginine 299. Residue histidine 41 is the Proton donor of the active site. Valine 295 to arginine 301 is a binding site for substrate. GTP-binding positions include arginine 301, lysine 327–aspartate 329, and glycine 412–glycine 414.

Belongs to the adenylosuccinate synthetase family. In terms of assembly, homodimer. Requires Mg(2+) as cofactor.

It localises to the cytoplasm. The catalysed reaction is IMP + L-aspartate + GTP = N(6)-(1,2-dicarboxyethyl)-AMP + GDP + phosphate + 2 H(+). It participates in purine metabolism; AMP biosynthesis via de novo pathway; AMP from IMP: step 1/2. Plays an important role in the de novo pathway and in the salvage pathway of purine nucleotide biosynthesis. Catalyzes the first committed step in the biosynthesis of AMP from IMP. In Neosartorya fischeri (strain ATCC 1020 / DSM 3700 / CBS 544.65 / FGSC A1164 / JCM 1740 / NRRL 181 / WB 181) (Aspergillus fischerianus), this protein is Adenylosuccinate synthetase.